A 97-amino-acid polypeptide reads, in one-letter code: Large ribosomal subunit protein uL23 (97 aa).

This sequence belongs to the universal ribosomal protein uL23 family. In terms of assembly, part of the 50S ribosomal subunit. Contacts protein L29, and trigger factor when it is bound to the ribosome.

Its function is as follows. One of the early assembly proteins it binds 23S rRNA. One of the proteins that surrounds the polypeptide exit tunnel on the outside of the ribosome. Forms the main docking site for trigger factor binding to the ribosome. This is Large ribosomal subunit protein uL23 from Bartonella henselae (strain ATCC 49882 / DSM 28221 / CCUG 30454 / Houston 1) (Rochalimaea henselae).